A 334-amino-acid polypeptide reads, in one-letter code: D-aspartate oxidase 1 (334 aa).

The FAD site is built by D35, R36, S43, G307, and T312. The Microbody targeting signal signature appears at 332–334 (SKL).

Belongs to the DAMOX/DASOX family. The cofactor is FAD. Expressed in the intestinal cells, hypodermis and in unidentified cells in the head in adult hermaphrodites.

The protein localises to the peroxisome matrix. The catalysed reaction is D-aspartate + O2 + H2O = oxaloacetate + H2O2 + NH4(+). The enzyme catalyses D-glutamate + O2 + H2O = H2O2 + 2-oxoglutarate + NH4(+). Its activity is regulated as follows. Not inhibited by potassium bromide or thiolactomycin. Functionally, selectively catalyzes the oxidative deamination of acidic amino acids. May play a role in the egg-laying events and early development of the worm, in addition to quality control of the germ cells. This is D-aspartate oxidase 1 (ddo-1) from Caenorhabditis elegans.